We begin with the raw amino-acid sequence, 571 residues long: Putative F-box protein At5g39460 (571 aa).

Residues 9-55 (ACLLLTLPEDVFAVISRFLSPSDICNLILCGKSLCALVDSEKTWLVQ) enclose the F-box domain.

In Arabidopsis thaliana (Mouse-ear cress), this protein is Putative F-box protein At5g39460.